Consider the following 56-residue polypeptide: Large ribosomal subunit protein bL33 (56 aa).

The protein belongs to the bacterial ribosomal protein bL33 family.

The sequence is that of Large ribosomal subunit protein bL33 from Rickettsia africae (strain ESF-5).